The sequence spans 296 residues: Pyridoxine/pyridoxal/pyridoxamine kinase (296 aa).

Positions 23 and 59 each coordinate substrate. Asp-125 contributes to the ATP binding site. A Mg(2+)-binding site is contributed by Tyr-136. Residues Thr-157, Glu-162, Thr-195, 222–225 (HQRV), and Thr-232 each bind ATP. Glu-162 is a Mg(2+) binding site. Position 234 (Asp-234) interacts with substrate.

The protein belongs to the pyridoxine kinase family. PdxK subfamily. Homodimer. Requires Mg(2+) as cofactor.

It catalyses the reaction pyridoxal + ATP = pyridoxal 5'-phosphate + ADP + H(+). The enzyme catalyses pyridoxine + ATP = pyridoxine 5'-phosphate + ADP + H(+). The catalysed reaction is pyridoxamine + ATP = pyridoxamine 5'-phosphate + ADP + H(+). It functions in the pathway cofactor metabolism; pyridoxal 5'-phosphate salvage; pyridoxal 5'-phosphate from pyridoxal: step 1/1. Its pathway is cofactor metabolism; pyridoxal 5'-phosphate salvage; pyridoxine 5'-phosphate from pyridoxine: step 1/1. The protein operates within cofactor metabolism; pyridoxal 5'-phosphate salvage; pyridoxamine 5'-phosphate from pyridoxamine: step 1/1. Functionally, B6-vitamer kinase involved in the salvage pathway of pyridoxal 5'-phosphate (PLP). Catalyzes the phosphorylation of pyridoxine (PN), pyridoxal (PL), and pyridoxamine (PM), forming their respective 5'-phosphorylated esters, i.e. PNP, PLP and PMP. The protein is Pyridoxine/pyridoxal/pyridoxamine kinase of Bordetella avium (strain 197N).